We begin with the raw amino-acid sequence, 442 residues long: MGDSGKLEATIDRLLNEEKQMRLAENVAGTRKAATEILQLCFDAKDWKLLNEQILNLSKKRGQLKQAVQSMVQQAMQYIDQTPDIETRIELIKTLNNVSAGKIYVEIERARLTKKLAKIKEEQGQIAEAADLMQEVAVETFGAMAKTEKIAFILEQVRLCLDRQDFVRAQILSRKINPRVFDADTKKDKKKPKEGDNMVEEAPADIPTLLELKRIYYELMIRYYSHNNEYIEICRSYKAIYDIPSVKETPEQWIPVLRKICWFLVLAPHDPMQSSLLNATLEDKNLSEIPDFKMLLKQVVTMEVIQWTSLWNKYKDEFEKEKSMIGGSLGDKAGEDLKLRIIEHNILVVSKYYARITLKRLAELLCLSMEEAEKHLSEMVVSKALIAKIDRPSGIVCFQIAKDSNEILNSWAGNLEKLLDLVEKSCHQIHKETMVHKAALRP.

Residues lysine 6–alanine 137 are a coiled coil. The PCI domain maps to glutamate 232–aspartate 403.

Belongs to the proteasome subunit p55 family. As to quaternary structure, component of the 19S regulatory particle (RP/PA700) lid subcomplex of the 26S proteasome. The 26S proteasome is composed of a core protease (CP), known as the 20S proteasome, capped at one or both ends by the 19S regulatory particle (RP/PA700). The RP/PA700 complex is composed of at least 17 different subunits in two subcomplexes, the base and the lid, which form the portions proximal and distal to the 20S proteolytic core, respectively. In terms of tissue distribution, ubiquitous with highest expression in flowers.

Its subcellular location is the cytoplasm. It is found in the nucleus. Its function is as follows. Acts as a regulatory subunit of the 26 proteasome which is involved in the ATP-dependent degradation of ubiquitinated proteins. Required for gametogenesis and sporophyte development. Acts redundantly with RPN5B. The sequence is that of 26S proteasome non-ATPase regulatory subunit 12 homolog A (RPN5A) from Arabidopsis thaliana (Mouse-ear cress).